Consider the following 348-residue polypeptide: Rhodopsin (348 aa).

The residue at position 1 (methionine 1) is an N-acetylmethionine. Residues 1–36 (MNGTEGPNFYVPFSNKTGVVRSPFEYPQYYLAEPWQ) are Extracellular-facing. N-linked (GlcNAc...) asparagine glycosylation is found at asparagine 2 and asparagine 15. The helical transmembrane segment at 37–61 (FSMLAAYMFLLIVLGFPINFLTLYV) threads the bilayer. At 62 to 73 (TVQHKKLRTPLN) the chain is on the cytoplasmic side. The helical transmembrane segment at 74 to 96 (YILLNLAVADLFMVFGGFTTTLY) threads the bilayer. Residues 97-110 (TSLHGYFVFGPTGC) lie on the Extracellular side of the membrane. Cysteine 110 and cysteine 187 are disulfide-bonded. Residues 111-133 (NLEGFFATLGGEIALWSLVVLAI) traverse the membrane as a helical segment. The 'Ionic lock' involved in activated form stabilization motif lies at 134 to 136 (ERY). Over 134–152 (ERYVVVCKPMSNFRFGENH) the chain is Cytoplasmic. Residues 153–173 (AIMGVAFTWVMALACAAPPLV) form a helical membrane-spanning segment. The Extracellular portion of the chain corresponds to 174 to 202 (GWSRYIPEGMQCSCGIDYYTLKPEVNNES). Residue glutamate 201 participates in Zn(2+) binding. Residues 203-224 (FVIYMFVVHFTIPMIVIFFCYG) form a helical membrane-spanning segment. The Cytoplasmic portion of the chain corresponds to 225 to 252 (QLVFTVKEAAAQQQESATTQKAEKEVTR). The helical transmembrane segment at 253-274 (MVIIMVIAFLICWVPYASVAFY) threads the bilayer. Over 275 to 286 (IFTHQGSNFGPI) the chain is Extracellular. Position 279 (glutamine 279) interacts with Zn(2+). The chain crosses the membrane as a helical span at residues 287-308 (FMTLPAFFAKSSSIYNPVIYIM). The residue at position 296 (lysine 296) is an N6-(retinylidene)lysine. Residues 309–348 (MNKQFRNCMLTTLCCGKNPLGDDEASTTGSKTETSQVAPA) lie on the Cytoplasmic side of the membrane. 2 S-palmitoyl cysteine lipidation sites follow: cysteine 322 and cysteine 323. The interval 330-348 (DDEASTTGSKTETSQVAPA) is interaction with SAG. Serine 334 bears the Phosphoserine mark. Residues threonine 335 and threonine 336 each carry the phosphothreonine modification. Residue serine 338 is modified to Phosphoserine. 2 positions are modified to phosphothreonine: threonine 340 and threonine 342. Serine 343 carries the phosphoserine modification.

Belongs to the G-protein coupled receptor 1 family. Opsin subfamily. As to quaternary structure, homodimer. May form a complex composed of RHO, GRK1 and RCVRN in a Ca(2+)-dependent manner; RCVRN prevents the interaction between GRK1 and RHO. Interacts with GRK1. Interacts (phosphorylated form) with SAG. Interacts with GNAT1. Interacts with GNAT3. SAG and G-proteins compete for a common binding site. Interacts with PRCD; the interaction promotes PRCD stability. Forms a complex with ASAP1 and ARF4. Forms a complex with ASAP1, RAB11A, Rabin8/RAB3IP, ARF4 and RAB11FIP3; the complex regulates Golgi-to-cilia rhodopsin/RHO transport in photoreceptors. In terms of processing, phosphorylated on some or all of the serine and threonine residues present in the C-terminal region. Contains one covalently linked retinal chromophore. Upon light absorption, the covalently bound 11-cis-retinal is converted to all-trans-retinal. After hydrolysis of the Schiff base and release of the covalently bound all-trans-retinal, active rhodopsin is regenerated by binding of a fresh molecule of 11-cis-retinal.

Its subcellular location is the membrane. The protein resides in the cell projection. It localises to the cilium. It is found in the photoreceptor outer segment. Photoreceptor required for image-forming vision at low light intensity. Required for photoreceptor cell viability after birth. Light-induced isomerization of 11-cis to all-trans retinal triggers a conformational change that activates signaling via G-proteins. Subsequent receptor phosphorylation mediates displacement of the bound G-protein alpha subunit by the arrestin SAG and terminates signaling. This Felis catus (Cat) protein is Rhodopsin (RHO).